The following is a 487-amino-acid chain: MTVQTAQIVKNYIGGEWVESISTKMEAVYNPATGEVIAQVPLSTKVDVEQAVLAANEAFKSWSKTAVPKRARILFKYQQLLVDNWEELAKLITIENGKSYNEAYGEVLRGIECVEFAAGAPTLMMGKQLPDIATGIESGMYRYPIGVIGGITPFNFPMMVPCWMFPLAIACGNTFVLKPSERTPLLAARLAELAEEAGLPKGVLNIVNGAHDVVNGLLEHKLVKAISFVGSQPVAEYVYKKGTENLKRVQALAGAKNHSIVLNDANLELATKQIISAAFGSAGERCMAASVVTVEEEIADQLVERLVAEANKIVIGNGLDEDVFLGPVIRDNHKERTIGYIDSGVEQGATLVRDGREDTAVKGAGYFVGPTIFDHVTKEMKIWQDEIFAPVLSIVRVKSLDEAIEIANESRFANGACIYTDSGASVRQFRETIESGMLGVNVGVPAPMAFFPFSGWKDSFYGDLHANGTDGVEFYTRKKMLTSRWEK.

NAD(+)-binding residues include Phe154, Lys178, Glu181, Arg182, and Ser231. Catalysis depends on Cys286, which acts as the Nucleophile. Glu386 contacts NAD(+).

This sequence belongs to the aldehyde dehydrogenase family. IolA subfamily. Homotetramer.

The enzyme catalyses 3-oxopropanoate + NAD(+) + CoA + H2O = hydrogencarbonate + acetyl-CoA + NADH + H(+). The catalysed reaction is 2-methyl-3-oxopropanoate + NAD(+) + CoA + H2O = propanoyl-CoA + hydrogencarbonate + NADH + H(+). It functions in the pathway polyol metabolism; myo-inositol degradation into acetyl-CoA; acetyl-CoA from myo-inositol: step 7/7. Catalyzes the oxidation of malonate semialdehyde (MSA) and methylmalonate semialdehyde (MMSA) into acetyl-CoA and propanoyl-CoA, respectively. Is involved in a myo-inositol catabolic pathway. Bicarbonate, and not CO2, is the end-product of the enzymatic reaction. The protein is Malonate-semialdehyde dehydrogenase 2 of Bacillus thuringiensis subsp. konkukian (strain 97-27).